A 263-amino-acid polypeptide reads, in one-letter code: MRLIIEPDYDKLSKWAADYVIERIHKAAPTAEKPFVLGLPTGSSPIGMYRELVKACKEGCISFRHVITFNMDEYVGLAIEHPESYHSFMHRHLFDHIDILPQNIHILNGNAPDLTAECDAYERAIEAAGGIDLFIGGIGPDGHIAFNEPGSSLTSRTRIKTLTTDTVLANSRFFDNDTNQVPKRALTVGVGTIMDAREVMILVNGHTKARALREAVEGAVSQMWTITALQLHRQSIIVCDEAACVELKVGTYNYFKDIERNNL.

D72 functions as the Proton acceptor; for enolization step in the catalytic mechanism. D141 acts as the For ring-opening step in catalysis. The active-site Proton acceptor; for ring-opening step is the H143. E148 acts as the For ring-opening step in catalysis.

The protein belongs to the glucosamine/galactosamine-6-phosphate isomerase family. NagB subfamily.

The catalysed reaction is alpha-D-glucosamine 6-phosphate + H2O = beta-D-fructose 6-phosphate + NH4(+). It functions in the pathway amino-sugar metabolism; N-acetylneuraminate degradation; D-fructose 6-phosphate from N-acetylneuraminate: step 5/5. With respect to regulation, allosterically activated by N-acetylglucosamine 6-phosphate (GlcNAc6P). In terms of biological role, catalyzes the reversible isomerization-deamination of glucosamine 6-phosphate (GlcN6P) to form fructose 6-phosphate (Fru6P) and ammonium ion. The sequence is that of Glucosamine-6-phosphate deaminase from Porphyromonas gingivalis (strain ATCC BAA-308 / W83).